The following is a 316-amino-acid chain: Aspartate carbamoyltransferase catalytic subunit (316 aa).

2 residues coordinate carbamoyl phosphate: Arg66 and Thr67. Lys94 serves as a coordination point for L-aspartate. Carbamoyl phosphate is bound by residues Arg116, His146, and Gln149. L-aspartate is bound by residues Arg179 and Arg234. Positions 275 and 276 each coordinate carbamoyl phosphate.

Belongs to the aspartate/ornithine carbamoyltransferase superfamily. ATCase family. In terms of assembly, heterododecamer (2C3:3R2) of six catalytic PyrB chains organized as two trimers (C3), and six regulatory PyrI chains organized as three dimers (R2).

The enzyme catalyses carbamoyl phosphate + L-aspartate = N-carbamoyl-L-aspartate + phosphate + H(+). Its pathway is pyrimidine metabolism; UMP biosynthesis via de novo pathway; (S)-dihydroorotate from bicarbonate: step 2/3. Its function is as follows. Catalyzes the condensation of carbamoyl phosphate and aspartate to form carbamoyl aspartate and inorganic phosphate, the committed step in the de novo pyrimidine nucleotide biosynthesis pathway. The protein is Aspartate carbamoyltransferase catalytic subunit of Nitrosomonas europaea (strain ATCC 19718 / CIP 103999 / KCTC 2705 / NBRC 14298).